The following is a 517-amino-acid chain: 2,3-bisphosphoglycerate-independent phosphoglycerate mutase (517 aa).

Positions 14 and 64 each coordinate Mn(2+). Residue serine 64 is the Phosphoserine intermediate of the active site. Residues histidine 125, arginine 155–aspartate 156, arginine 187, arginine 193, arginine 263–arginine 266, and lysine 337 each bind substrate. Aspartate 404, histidine 408, aspartate 445, histidine 446, and histidine 464 together coordinate Mn(2+).

It belongs to the BPG-independent phosphoglycerate mutase family. Monomer. It depends on Mn(2+) as a cofactor.

It carries out the reaction (2R)-2-phosphoglycerate = (2R)-3-phosphoglycerate. It functions in the pathway carbohydrate degradation; glycolysis; pyruvate from D-glyceraldehyde 3-phosphate: step 3/5. Its function is as follows. Catalyzes the interconversion of 2-phosphoglycerate and 3-phosphoglycerate. This is 2,3-bisphosphoglycerate-independent phosphoglycerate mutase from Nitrosococcus oceani (strain ATCC 19707 / BCRC 17464 / JCM 30415 / NCIMB 11848 / C-107).